Reading from the N-terminus, the 898-residue chain is Serine/threonine-protein kinase PKH3 (898 aa).

In terms of domain architecture, Protein kinase spans 11–293 (FIFKEELGHG…LEQIKRHPYF (283 aa)). ATP contacts are provided by residues 17–25 (LGHGSYSTV) and Lys41. The active-site Proton acceptor is the Asp138. Disordered regions lie at residues 435-484 (PPKV…PSTE) and 675-850 (DSKA…EKYS). Residues 459–468 (PLQTSSIPQK) show a composition bias toward polar residues. The segment covering 469-483 (LSTSSASSALSAPST) has biased composition (low complexity). A Phosphoserine modification is found at Ser696. The span at 697–721 (IGNNVTTLSYTAKNGSQNNAPQNDN) shows a compositional bias: polar residues. A compositionally biased stretch (basic and acidic residues) spans 723–738 (GEEKPFRIPSSTKDRP). Composition is skewed to polar residues over residues 740–758 (ANST…NNAG), 771–782 (SAPSTNTYTNGS), and 789–803 (RPST…NILT). Position 753 is a phosphoserine (Ser753). Positions 804–817 (SKKQGSSVFSPSSS) are enriched in low complexity. Polar residues predominate over residues 818–831 (TTKPQIKTTGYRQP). Ser871 is subject to Phosphoserine.

Belongs to the protein kinase superfamily. Ser/Thr protein kinase family.

It carries out the reaction L-seryl-[protein] + ATP = O-phospho-L-seryl-[protein] + ADP + H(+). It catalyses the reaction L-threonyl-[protein] + ATP = O-phospho-L-threonyl-[protein] + ADP + H(+). In terms of biological role, serine/threonine-protein kinase which may phosphorylate the same targets substrates as PKH1 and PKH2, 2 upstream activators of PKC1. The polypeptide is Serine/threonine-protein kinase PKH3 (PKH3) (Saccharomyces cerevisiae (strain ATCC 204508 / S288c) (Baker's yeast)).